We begin with the raw amino-acid sequence, 71 residues long: Large ribosomal subunit protein bL31 (71 aa).

Residues C16, C18, C38, and C41 each contribute to the Zn(2+) site.

Belongs to the bacterial ribosomal protein bL31 family. Type A subfamily. Part of the 50S ribosomal subunit. It depends on Zn(2+) as a cofactor.

Functionally, binds the 23S rRNA. The protein is Large ribosomal subunit protein bL31 of Neisseria meningitidis serogroup A / serotype 4A (strain DSM 15465 / Z2491).